Here is a 689-residue protein sequence, read N- to C-terminus: Elongation factor G 1 (689 aa).

One can recognise a tr-type G domain in the interval 7-282 (DQVRTIGIIS…AVVDFLPSPL (276 aa)). GTP is bound by residues 16 to 23 (SHIDAGKT), 80 to 84 (DTPGH), and 134 to 137 (NKMD).

The protein belongs to the TRAFAC class translation factor GTPase superfamily. Classic translation factor GTPase family. EF-G/EF-2 subfamily.

It localises to the cytoplasm. In terms of biological role, catalyzes the GTP-dependent ribosomal translocation step during translation elongation. During this step, the ribosome changes from the pre-translocational (PRE) to the post-translocational (POST) state as the newly formed A-site-bound peptidyl-tRNA and P-site-bound deacylated tRNA move to the P and E sites, respectively. Catalyzes the coordinated movement of the two tRNA molecules, the mRNA and conformational changes in the ribosome. This Geobacter sulfurreducens (strain ATCC 51573 / DSM 12127 / PCA) protein is Elongation factor G 1.